The chain runs to 170 residues: Lipoprotein signal peptidase (170 aa).

Transmembrane regions (helical) follow at residues 9–29, 72–92, and 96–118; these read FNIF…KYLV, IFFL…SLKE, and IARI…RLFR. Residues Asp-124 and Asp-146 contribute to the active site. A helical transmembrane segment spans residues 143–163; the sequence is NFADSYVVIGMILFLVYDFFI.

Belongs to the peptidase A8 family.

The protein resides in the cell inner membrane. It carries out the reaction Release of signal peptides from bacterial membrane prolipoproteins. Hydrolyzes -Xaa-Yaa-Zaa-|-(S,diacylglyceryl)Cys-, in which Xaa is hydrophobic (preferably Leu), and Yaa (Ala or Ser) and Zaa (Gly or Ala) have small, neutral side chains.. It participates in protein modification; lipoprotein biosynthesis (signal peptide cleavage). Its function is as follows. This protein specifically catalyzes the removal of signal peptides from prolipoproteins. This Borreliella afzelii (strain PKo) (Borrelia afzelii) protein is Lipoprotein signal peptidase.